The following is a 240-amino-acid chain: Nudix hydrolase 3 (240 aa).

The Nudix hydrolase domain maps to 50–190; it reads NSAMSVLIPL…RMKYTLPSFD (141 aa). A Nudix box motif is present at residues 89–110; that stretch reads GRMDPGETTTETALRETFEEIG. Positions 104 and 108 each coordinate Mg(2+).

It belongs to the Nudix hydrolase family. PCD1 subfamily. It depends on Mn(2+) as a cofactor. Mg(2+) serves as cofactor.

In terms of biological role, probably mediates the hydrolysis of some nucleoside diphosphate derivatives. This Caenorhabditis elegans protein is Nudix hydrolase 3 (ndx-3).